Reading from the N-terminus, the 156-residue chain is Cyanate hydratase (156 aa).

Catalysis depends on residues arginine 96, glutamate 99, and serine 122.

It belongs to the cyanase family.

It carries out the reaction cyanate + hydrogencarbonate + 3 H(+) = NH4(+) + 2 CO2. In terms of biological role, catalyzes the reaction of cyanate with bicarbonate to produce ammonia and carbon dioxide. This Burkholderia orbicola (strain MC0-3) protein is Cyanate hydratase.